The following is a 431-amino-acid chain: Keratin, type I cytoskeletal 40 (431 aa).

The head stretch occupies residues 1-89 (MASEGSPDCC…CEEGTFNSNE (89 aa)). The 312-residue stretch at 89–400 (EKETMQFLND…GLLEKEDSRL (312 aa)) folds into the IF rod domain. The coil 1A stretch occupies residues 90 to 124 (KETMQFLNDRLASYLERVRSLEENNAELECRIREQ). The segment at 125–135 (CEPDATPVCPD) is linker 1. The coil 1B stretch occupies residues 136-236 (YQRYFDTIEE…HEEEVNLLRE (101 aa)). The linker 12 stretch occupies residues 237 to 252 (QLGDRLNVELDTAPTV). A coil 2 region spans residues 253 to 396 (DLNKVLDEMR…NTYRGLLEKE (144 aa)). The tract at residues 397 to 431 (DSRLPCNPGSTASISNSACEPCSAYVICTVENCCA) is tail.

This sequence belongs to the intermediate filament family. As to quaternary structure, heterotetramer of two type I and two type II keratins.

Its function is as follows. May play a role in late hair differentiation. The chain is Keratin, type I cytoskeletal 40 (Krt40) from Rattus norvegicus (Rat).